The following is a 100-amino-acid chain: MQLTPQEKDKLLIFTAALLAERRKGRGLKLNYPEAIAYISAAILEGARDGQTVAELMSYGTTLLTRDDVMEGIPEMVHDVQVEATFPDGTKLVTVHNPIR.

Belongs to the urease gamma subunit family. In terms of assembly, heterotrimer of UreA (gamma), UreB (beta) and UreC (alpha) subunits. Three heterotrimers associate to form the active enzyme.

Its subcellular location is the cytoplasm. It catalyses the reaction urea + 2 H2O + H(+) = hydrogencarbonate + 2 NH4(+). It functions in the pathway nitrogen metabolism; urea degradation; CO(2) and NH(3) from urea (urease route): step 1/1. This chain is Urease subunit gamma, found in Nostoc punctiforme (strain ATCC 29133 / PCC 73102).